Here is a 139-residue protein sequence, read N- to C-terminus: uncharacterized protein (139 aa).

This is an uncharacterized protein from Sputnik virophage.